The chain runs to 283 residues: Protein ATAF2 (283 aa).

Positions 7–159 (LPAGFRFHPT…DWVLCRIYNK (153 aa)) constitute an NAC domain. The DNA-binding element occupies 103 to 165 (LGIKKALVFY…IYNKKGTMEK (63 aa)). A disordered region spans residues 171–211 (EKPRTTTMAEQSSSPFDTSDSTYPTLQEDDSSSSGGHGHVV). Residues 175–195 (TTTMAEQSSSPFDTSDSTYPT) are compositionally biased toward polar residues.

In terms of assembly, homodimer. Interacts with AHK2. Interacts with AHL12 and AHL27. Interacts with the helicase domain of the tobamovirus (TMV) replicase. Expressed in roots, cotyledons, rosette leaves, cauline leaves and mature flowers. Expressed at low levels in stems and flower buds.

The protein localises to the nucleus. Its function is as follows. Involved in disease resistance response. May function as repressor of pathogenesis-related proteins. May function in the regulation of host basal defense responses against viral infection. Transcriptional activator involved in responses to wounding and infection with tobamovirus (TMV). Binds to the DNA sequences 5'-AAAATATCT-3' and 5'AGATTTTT-3' of CYP734A1/BAS1 and CYP72C1/SOB7 promoters, respectively. Acts as a suppressor of the brassinosteroid (BR)-inactivating enzymes CYP734A1/BAS1 and CYP72C1/SOB7, and prevents their expression in almost all tissues. Plays a central role in integrating BR homeostasis and seedling development. Regulates the spatial regulation of BR homeostasis and participates in the regulation of hypocotyl elongation and root growth by suppressing BR catabolism. Mediates connection between BR catabolism and photomorphogenesis. Binds to, and transactivates the promoter of the auxin biosynthetic gene NIT2. Stress-responsive NAC transcription factor involved in ABA-inducible leaf senescence signaling. Required for normal seed development and morphology. The protein is Protein ATAF2 (NAC081) of Arabidopsis thaliana (Mouse-ear cress).